A 388-amino-acid polypeptide reads, in one-letter code: Chaperone protein DnaJ (388 aa).

Residues 5 to 69 (DYYDVLGVDK…QKRAQYDQFG (65 aa)) form the J domain. The CR-type zinc finger occupies 145–227 (GKKTDITYTR…CHGQGTVDKK (83 aa)). Residues Cys158, Cys161, Cys175, Cys178, Cys201, Cys204, Cys215, and Cys218 each coordinate Zn(2+). CXXCXGXG motif repeat units lie at residues 158–165 (CPTCDGSG), 175–182 (CDKCHGSG), 201–208 (CDKCGGRG), and 215–222 (CQTCHGQG).

Belongs to the DnaJ family. As to quaternary structure, homodimer. The cofactor is Zn(2+).

The protein localises to the cytoplasm. In terms of biological role, participates actively in the response to hyperosmotic and heat shock by preventing the aggregation of stress-denatured proteins and by disaggregating proteins, also in an autonomous, DnaK-independent fashion. Unfolded proteins bind initially to DnaJ; upon interaction with the DnaJ-bound protein, DnaK hydrolyzes its bound ATP, resulting in the formation of a stable complex. GrpE releases ADP from DnaK; ATP binding to DnaK triggers the release of the substrate protein, thus completing the reaction cycle. Several rounds of ATP-dependent interactions between DnaJ, DnaK and GrpE are required for fully efficient folding. Also involved, together with DnaK and GrpE, in the DNA replication of plasmids through activation of initiation proteins. The sequence is that of Chaperone protein DnaJ from Lactobacillus johnsonii (strain CNCM I-12250 / La1 / NCC 533).